The sequence spans 98 residues: Large ribosomal subunit protein eL21 (98 aa).

The tract at residues 1–24 (MVKMSHGPRSGSRRKLTKSAEERK) is disordered.

This sequence belongs to the eukaryotic ribosomal protein eL21 family.

The protein is Large ribosomal subunit protein eL21 (rpl21e) of Thermoplasma acidophilum (strain ATCC 25905 / DSM 1728 / JCM 9062 / NBRC 15155 / AMRC-C165).